We begin with the raw amino-acid sequence, 196 residues long: Large ribosomal subunit protein eL15 (196 aa).

Basic residues predominate over residues 162-172 (RGKTSAGRRAR). A disordered region spans residues 162-196 (RGKTSAGRRARGLQNRGKGTEGLRPSTNADKRNKS).

This sequence belongs to the eukaryotic ribosomal protein eL15 family.

In Halobacterium salinarum (strain ATCC 29341 / DSM 671 / R1), this protein is Large ribosomal subunit protein eL15.